The chain runs to 83 residues: Cell division topological specificity factor (83 aa).

This sequence belongs to the MinE family.

Functionally, prevents the cell division inhibition by proteins MinC and MinD at internal division sites while permitting inhibition at polar sites. This ensures cell division at the proper site by restricting the formation of a division septum at the midpoint of the long axis of the cell. This is Cell division topological specificity factor from Deinococcus deserti (strain DSM 17065 / CIP 109153 / LMG 22923 / VCD115).